The sequence spans 499 residues: Probable UTP--glucose-1-phosphate uridylyltransferase (499 aa).

UTP is bound by residues 108 to 111 (LNGG), Lys122, Gln185, and Gly214. 110–111 (GG) is a substrate binding site. Residues His215 and 243–245 (NID) contribute to the substrate site. UTP contacts are provided by Asp245 and Lys387.

Belongs to the UDPGP type 1 family.

It localises to the cytoplasm. The protein localises to the nucleus. The catalysed reaction is alpha-D-glucose 1-phosphate + UTP + H(+) = UDP-alpha-D-glucose + diphosphate. In terms of biological role, plays a central role as a glucosyl donor in cellular metabolic pathways. This Schizosaccharomyces pombe (strain 972 / ATCC 24843) (Fission yeast) protein is Probable UTP--glucose-1-phosphate uridylyltransferase.